A 199-amino-acid chain; its full sequence is Inner membrane-spanning protein YciB (199 aa).

Transmembrane regions (helical) follow at residues 4–24 (FIDF…PRIV), 36–56 (IFSA…TLFL), 64–84 (GQWI…TFQS), 90–110 (WKAP…HFIG), 135–155 (LAWV…AFTF), and 162–182 (FKVF…GVFL).

The protein belongs to the YciB family.

Its subcellular location is the cell inner membrane. Plays a role in cell envelope biogenesis, maintenance of cell envelope integrity and membrane homeostasis. This Azotobacter vinelandii (strain DJ / ATCC BAA-1303) protein is Inner membrane-spanning protein YciB.